We begin with the raw amino-acid sequence, 296 residues long: Cytidine deaminase (296 aa).

CMP/dCMP-type deaminase domains are found at residues 47–167 (TEAE…FGPK) and 186–296 (DSSD…VDPV). 88 to 90 (NLE) contributes to the substrate binding site. Zn(2+) is bound at residue His-101. The active-site Proton donor is the Glu-103. Residues Cys-128 and Cys-131 each contribute to the Zn(2+) site.

The protein belongs to the cytidine and deoxycytidylate deaminase family. In terms of assembly, homodimer. Zn(2+) serves as cofactor.

It catalyses the reaction cytidine + H2O + H(+) = uridine + NH4(+). The enzyme catalyses 2'-deoxycytidine + H2O + H(+) = 2'-deoxyuridine + NH4(+). In terms of biological role, this enzyme scavenges exogenous and endogenous cytidine and 2'-deoxycytidine for UMP synthesis. In Shewanella sp. (strain MR-4), this protein is Cytidine deaminase.